The following is a 597-amino-acid chain: Serine/arginine repetitive matrix protein 3 (597 aa).

Positions 1–31 (MSSTVNNGAASMQSTPDAANGFPQPSSSSGT) are enriched in polar residues. The disordered stretch occupies residues 1–47 (MSSTVNNGAASMQSTPDAANGFPQPSSSSGTWPRAEEELRAAEPGLV). Positions 55-98 (LDHERKRRVELKCMELQEMMEEQGYSEEEIRQKVGTFRQMLMEK) constitute a CWF21 domain. Over residues 99 to 109 (EGVLTREDRPG) the composition is skewed to basic and acidic residues. The segment at 99 to 597 (EGVLTREDRP…GPAPLPPPAA (499 aa)) is disordered. 4 stretches are compositionally biased toward basic residues: residues 149 to 158 (RGHRGYRTKH), 168 to 186 (PKKKKKKKGGHRRSRKKRR), 199 to 211 (LRKKKKSVKKHRR), and 219 to 243 (RRKRRHRSRSSKCKRKEKNKEKKRP). 2 stretches are compositionally biased toward low complexity: residues 257 to 278 (SGSSHSPSLSSHYSDSRSPSRL) and 291 to 313 (SQRSSGSRSPSPSGGSGWGSPQR). 2 stretches are compositionally biased toward gly residues: residues 315–328 (GGSGQRSGAHGGRP) and 374–383 (GRGGRAAGGA). Residues 384-412 (GRRRRRRRRRRRSRSSASAPRRRGRRRPR) show a composition bias toward basic residues. Composition is skewed to low complexity over residues 417 to 433 (RGSSRSLSRARSSSDSG), 466 to 476 (RPASTSPSPGA), and 488 to 507 (SSRSPGPHPRSWSSSRSPSK). Positions 530–549 (LSRDKDGEGRARHSEAEATR) are enriched in basic and acidic residues. Positions 550–565 (ARRRSRSYSPIRKRRR) are enriched in basic residues.

This sequence belongs to the CWC21 family. As to expression, expressed in breast cancer cell lines.

Functionally, may play a role in regulating breast cancer cell invasiveness. May be involved in RYBP-mediated breast cancer progression. The chain is Serine/arginine repetitive matrix protein 3 (SRRM3) from Homo sapiens (Human).